Reading from the N-terminus, the 169-residue chain is Protein-export protein SecB (169 aa).

Belongs to the SecB family. As to quaternary structure, homotetramer, a dimer of dimers. One homotetramer interacts with 1 SecA dimer.

The protein resides in the cytoplasm. One of the proteins required for the normal export of preproteins out of the cell cytoplasm. It is a molecular chaperone that binds to a subset of precursor proteins, maintaining them in a translocation-competent state. It also specifically binds to its receptor SecA. The protein is Protein-export protein SecB of Mannheimia succiniciproducens (strain KCTC 0769BP / MBEL55E).